The primary structure comprises 202 residues: Urease accessory protein UreG (202 aa).

A GTP-binding site is contributed by 13–20; the sequence is GPVGAGKT.

This sequence belongs to the SIMIBI class G3E GTPase family. UreG subfamily. As to quaternary structure, homodimer. UreD, UreF and UreG form a complex that acts as a GTP-hydrolysis-dependent molecular chaperone, activating the urease apoprotein by helping to assemble the nickel containing metallocenter of UreC. The UreE protein probably delivers the nickel.

It localises to the cytoplasm. Its function is as follows. Facilitates the functional incorporation of the urease nickel metallocenter. This process requires GTP hydrolysis, probably effectuated by UreG. The sequence is that of Urease accessory protein UreG from Dinoroseobacter shibae (strain DSM 16493 / NCIMB 14021 / DFL 12).